Consider the following 401-residue polypeptide: Imidazolonepropionase (401 aa).

Residues histidine 70 and histidine 72 each coordinate Fe(3+). Zn(2+)-binding residues include histidine 70 and histidine 72. 3 residues coordinate 4-imidazolone-5-propanoate: arginine 79, tyrosine 142, and histidine 175. Tyrosine 142 is an N-formimidoyl-L-glutamate binding site. Histidine 238 contributes to the Fe(3+) binding site. Histidine 238 is a Zn(2+) binding site. Glutamine 241 contributes to the 4-imidazolone-5-propanoate binding site. Aspartate 313 is a binding site for Fe(3+). Aspartate 313 provides a ligand contact to Zn(2+). Positions 315 and 317 each coordinate N-formimidoyl-L-glutamate. Threonine 318 contributes to the 4-imidazolone-5-propanoate binding site.

Belongs to the metallo-dependent hydrolases superfamily. HutI family. The cofactor is Zn(2+). Requires Fe(3+) as cofactor.

The protein localises to the cytoplasm. The catalysed reaction is 4-imidazolone-5-propanoate + H2O = N-formimidoyl-L-glutamate. It functions in the pathway amino-acid degradation; L-histidine degradation into L-glutamate; N-formimidoyl-L-glutamate from L-histidine: step 3/3. In terms of biological role, catalyzes the hydrolytic cleavage of the carbon-nitrogen bond in imidazolone-5-propanoate to yield N-formimidoyl-L-glutamate. It is the third step in the universal histidine degradation pathway. The chain is Imidazolonepropionase from Xanthomonas campestris pv. campestris (strain 8004).